The primary structure comprises 312 residues: L-type lectin-like domain-containing protein C126.08c (312 aa).

A signal peptide spans 1-22 (MFFSVKNVFLLGIFGFVLGALA). Over 23-280 (ETSHLERLSL…QKKGSFKKRL (258 aa)) the chain is Extracellular. Residues 24–248 (TSHLERLSLE…EIASILSRTI (225 aa)) enclose the L-type lectin-like domain. A helical transmembrane segment spans residues 281–301 (IILLLSLIVIFSIFALRSYQV). Residues 302 to 312 (QQEKNRRTTVL) are Cytoplasmic-facing.

It localises to the membrane. Its subcellular location is the endoplasmic reticulum. The protein localises to the golgi apparatus. The protein resides in the vacuole. The sequence is that of L-type lectin-like domain-containing protein C126.08c from Schizosaccharomyces pombe (strain 972 / ATCC 24843) (Fission yeast).